Here is a 774-residue protein sequence, read N- to C-terminus: Lysyl oxidase homolog 2 (774 aa).

An N-terminal signal peptide occupies residues 1–25; it reads MERPLCSHLCSCLAMLALLSPLSLA. SRCR domains lie at 58-159, 188-302, 326-425, and 435-544; these read LRLA…VVCS, IRAI…VSCV, VRLR…VRCN, and LRLN…VACS. 9 disulfide bridges follow: C84–C148, C97–C158, C128–C138, C218–C291, C231–C301, C265–C275, C351–C414, C364–C424, and C395–C405. N288 carries N-linked (GlcNAc...) asparagine glycosylation. The N-linked (GlcNAc...) (complex) asparagine glycan is linked to N455. Cystine bridges form between C464–C530, C477–C543, and C511–C521. The segment at 548–751 is lysyl-oxidase like; that stretch reads PDLVLNAEMV…WMYNCHIGGS (204 aa). Residues D549 and L550 each coordinate Ca(2+). Intrachain disulfides connect C573-C625, C579-C695, C657-C673, and C663-C685. The Cu cation site is built by H626, H628, and H630. N-linked (GlcNAc...) (complex) asparagine glycosylation is present at N644. Residues 653 to 689 constitute a cross-link (lysine tyrosylquinone (Lys-Tyr)); that stretch reads KASFCLEDTECEGDIQKNYECANFGDQGITMGCWDMY. Y689 carries the post-translational modification 2',4',5'-topaquinone. Ca(2+) is bound by residues E722, D724, N727, and N728. The cysteines at positions 732 and 746 are disulfide-linked.

This sequence belongs to the lysyl oxidase family. In terms of assembly, component of some chromatin repressor complex. Interacts with SNAI1. Interacts with TAF10. Interacts with HSPA5. Interacts with EFEMP2. Cu cation is required as a cofactor. Requires lysine tyrosylquinone residue as cofactor. The lysine tyrosylquinone cross-link (LTQ) is generated by condensation of the epsilon-amino group of a lysine with a topaquinone produced by oxidation of tyrosine. Post-translationally, N-glycosylated. N-glycosylation on Asn-455 and Asn-644 may be essential for proper folding and secretion; may be composed of a fucosylated carbohydrates attached to a trimannose N-linked glycan core. Expressed in many tissues. Highest expression in reproductive tissues, placenta, uterus and prostate. In esophageal epithelium, expressed in the basal, prickle and granular cell layers. Up-regulated in a number of cancers cells and tissues.

It is found in the secreted. It localises to the extracellular space. The protein localises to the extracellular matrix. The protein resides in the basement membrane. Its subcellular location is the nucleus. It is found in the chromosome. It localises to the endoplasmic reticulum. The catalysed reaction is L-lysyl-[protein] + O2 + H2O = (S)-2-amino-6-oxohexanoyl-[protein] + H2O2 + NH4(+). With respect to regulation, according to some reports, it is inhibited by beta-aminopropionitrile (BAPN). According to another report, it is not inhibited by beta-aminopropionitrile (BAPN). Specifically inhibited by a mouse monoclonal antibody AB0023, inhibition occurs in a non-competitive manner. Its function is as follows. Mediates the post-translational oxidative deamination of lysine residues on target proteins leading to the formation of deaminated lysine (allysine). Acts as a transcription corepressor and specifically mediates deamination of trimethylated 'Lys-4' of histone H3 (H3K4me3), a specific tag for epigenetic transcriptional activation. Shows no activity against histone H3 when it is trimethylated on 'Lys-9' (H3K9me3) or 'Lys-27' (H3K27me3) or when 'Lys-4' is monomethylated (H3K4me1) or dimethylated (H3K4me2). Also mediates deamination of methylated TAF10, a member of the transcription factor IID (TFIID) complex, which induces release of TAF10 from promoters, leading to inhibition of TFIID-dependent transcription. LOXL2-mediated deamination of TAF10 results in transcriptional repression of genes required for embryonic stem cell pluripotency including POU5F1/OCT4, NANOG, KLF4 and SOX2. Involved in epithelial to mesenchymal transition (EMT) via interaction with SNAI1 and participates in repression of E-cadherin CDH1, probably by mediating deamination of histone H3. During EMT, involved with SNAI1 in negatively regulating pericentromeric heterochromatin transcription. SNAI1 recruits LOXL2 to pericentromeric regions to oxidize histone H3 and repress transcription which leads to release of heterochromatin component CBX5/HP1A, enabling chromatin reorganization and acquisition of mesenchymal traits. Interacts with the endoplasmic reticulum protein HSPA5 which activates the IRE1-XBP1 pathway of the unfolded protein response, leading to expression of several transcription factors involved in EMT and subsequent EMT induction. Involved in E-cadherin repression following hypoxia, a hallmark of EMT believed to amplify tumor aggressiveness, suggesting that it may play a role in tumor progression. When secreted into the extracellular matrix, promotes cross-linking of extracellular matrix proteins by mediating oxidative deamination of peptidyl lysine residues in precursors to fibrous collagen and elastin. Acts as a regulator of sprouting angiogenesis, probably via collagen IV scaffolding. Acts as a regulator of chondrocyte differentiation, probably by regulating expression of factors that control chondrocyte differentiation. This chain is Lysyl oxidase homolog 2 (LOXL2), found in Homo sapiens (Human).